The sequence spans 206 residues: Sclerostin domain-containing protein 1 (206 aa).

A signal peptide spans 1 to 23 (MLPPAIHFYLLPLACILMKSCLA). Residue Asn-47 is glycosylated (N-linked (GlcNAc...) asparagine). 4 disulfides stabilise this stretch: Cys-75-Cys-133, Cys-89-Cys-147, Cys-100-Cys-163, and Cys-104-Cys-165. Residues 75-170 (CRELRSTKYI…TACKCKRYTR (96 aa)) form the CTCK domain. An N-linked (GlcNAc...) asparagine glycan is attached at Asn-173. A disordered region spans residues 174–206 (ESSHNFESMSPAKPVQHHRERKRASKSSKHSMS). Residues 188–206 (VQHHRERKRASKSSKHSMS) are compositionally biased toward basic residues.

It belongs to the sclerostin family. As to quaternary structure, interacts with BMP2, BMP4, BMP6 and BMP7 with high affinity. Highly expressed in kidney and weakly in lung.

The protein resides in the secreted. Functionally, may be involved in the onset of endometrial receptivity for implantation/sensitization for the decidual cell reaction Enhances Wnt signaling and inhibits TGF-beta signaling. Directly antagonizes activity of BMP2, BMP4, BMP6 and BMP7 in a dose-dependent manner. The polypeptide is Sclerostin domain-containing protein 1 (SOSTDC1) (Homo sapiens (Human)).